A 389-amino-acid chain; its full sequence is Mannitol-1-phosphate 5-dehydrogenase (389 aa).

5–16 serves as a coordination point for NAD(+); sequence AIQFGGGNIGRG. Lys-214 is a catalytic residue.

The protein belongs to the mannitol dehydrogenase family. As to quaternary structure, monomer.

It carries out the reaction D-mannitol 1-phosphate + NAD(+) = beta-D-fructose 6-phosphate + NADH + H(+). Its function is as follows. Catalyzes the NAD(H)-dependent interconversion of D-fructose 6-phosphate and D-mannitol 1-phosphate in the mannitol metabolic pathway. The sequence is that of Mannitol-1-phosphate 5-dehydrogenase from Talaromyces marneffei (strain ATCC 18224 / CBS 334.59 / QM 7333) (Penicillium marneffei).